The following is a 599-amino-acid chain: MSDLSHIRNFSIIAHIDHGKSTLADRFIQHCGGLSDREMAEQVLDSMELERERGITIKAQSVTLNYQARDGKTYQLNFIDTPGHVDFSYEVSRSLAACEGALLVVDAAQGVEAQSVANCYTAIEQGLEVIPVLNKMDLPQAEPDKVAQEVEDIIGIDATEAVRCSAKSGLGIEDVLEALVNGIPAPVGDIDAPLQALIIDSWFDNYLGVVSLVRVTQGTLKTKDKIISKSIGKAHVVDMVGVFTPKRHVTGVLRAGEVGFVVAGIKEILGAPVGDTITHSNTADVKALPGFQKVKPQVYAGLFPVSSDDYESFREALAKLTLNDASLFYEPESSDALGFGFRCGFLGMLHMEIIQERLEREYDLDLITTAPTVVYEVVTSDGTTIYVDNPSKLPDVGFIDEMREPICEANILVPSDYLGAVITLCVEKRGIQKNLQYVGSQVSVSYELPMNEVVMDFFDRLKSVSRGFASLDYNFVRFEAAKLVRLDVLINSEKVDALALIVHRDNAPYKGRALADKMKELIPRQMFDVAIQAAIGGQIVARTTVKALRKNVTAKCYGGDVTRKKKLLEKQKAGKKRMKQVGRVEIPQEAFLAVLKVDS.

One can recognise a tr-type G domain in the interval 5–187 (SHIRNFSIIA…ALVNGIPAPV (183 aa)). GTP is bound by residues 17–22 (DHGKST) and 134–137 (NKMD).

Belongs to the TRAFAC class translation factor GTPase superfamily. Classic translation factor GTPase family. LepA subfamily.

Its subcellular location is the cell inner membrane. The enzyme catalyses GTP + H2O = GDP + phosphate + H(+). Functionally, required for accurate and efficient protein synthesis under certain stress conditions. May act as a fidelity factor of the translation reaction, by catalyzing a one-codon backward translocation of tRNAs on improperly translocated ribosomes. Back-translocation proceeds from a post-translocation (POST) complex to a pre-translocation (PRE) complex, thus giving elongation factor G a second chance to translocate the tRNAs correctly. Binds to ribosomes in a GTP-dependent manner. The protein is Elongation factor 4 of Teredinibacter turnerae (strain ATCC 39867 / T7901).